A 179-amino-acid chain; its full sequence is Large ribosomal subunit protein uL5 (179 aa).

This sequence belongs to the universal ribosomal protein uL5 family. In terms of assembly, part of the 50S ribosomal subunit; part of the 5S rRNA/L5/L18/L25 subcomplex. Contacts the 5S rRNA and the P site tRNA. Forms a bridge to the 30S subunit in the 70S ribosome.

Its function is as follows. This is one of the proteins that bind and probably mediate the attachment of the 5S RNA into the large ribosomal subunit, where it forms part of the central protuberance. In the 70S ribosome it contacts protein S13 of the 30S subunit (bridge B1b), connecting the 2 subunits; this bridge is implicated in subunit movement. Contacts the P site tRNA; the 5S rRNA and some of its associated proteins might help stabilize positioning of ribosome-bound tRNAs. The polypeptide is Large ribosomal subunit protein uL5 (Prochlorococcus marinus (strain MIT 9215)).